Here is a 202-residue protein sequence, read N- to C-terminus: Imidazoleglycerol-phosphate dehydratase (202 aa).

Belongs to the imidazoleglycerol-phosphate dehydratase family.

The protein resides in the cytoplasm. It catalyses the reaction D-erythro-1-(imidazol-4-yl)glycerol 3-phosphate = 3-(imidazol-4-yl)-2-oxopropyl phosphate + H2O. The protein operates within amino-acid biosynthesis; L-histidine biosynthesis; L-histidine from 5-phospho-alpha-D-ribose 1-diphosphate: step 6/9. This is Imidazoleglycerol-phosphate dehydratase from Nocardioides sp. (strain ATCC BAA-499 / JS614).